The primary structure comprises 294 residues: 4-hydroxy-tetrahydrodipicolinate synthase (294 aa).

T45 provides a ligand contact to pyruvate. Y133 acts as the Proton donor/acceptor in catalysis. The active-site Schiff-base intermediate with substrate is K162. A pyruvate-binding site is contributed by I204.

It belongs to the DapA family. As to quaternary structure, homotetramer; dimer of dimers.

It is found in the cytoplasm. It catalyses the reaction L-aspartate 4-semialdehyde + pyruvate = (2S,4S)-4-hydroxy-2,3,4,5-tetrahydrodipicolinate + H2O + H(+). It functions in the pathway amino-acid biosynthesis; L-lysine biosynthesis via DAP pathway; (S)-tetrahydrodipicolinate from L-aspartate: step 3/4. Catalyzes the condensation of (S)-aspartate-beta-semialdehyde [(S)-ASA] and pyruvate to 4-hydroxy-tetrahydrodipicolinate (HTPA). The chain is 4-hydroxy-tetrahydrodipicolinate synthase from Bartonella henselae (strain ATCC 49882 / DSM 28221 / CCUG 30454 / Houston 1) (Rochalimaea henselae).